Consider the following 280-residue polypeptide: Golgi phosphoprotein 3-like A (280 aa).

A disordered region spans residues 1–32 (MTTLIRRGRRAEEGQERRADSEDSIKDKDEEE). Positions 10 to 32 (RAEEGQERRADSEDSIKDKDEEE) are enriched in basic and acidic residues. A 1,2-diacyl-sn-glycero-3-phospho-(1D-myo-inositol 4-phosphate) contacts are provided by Trp62, Arg71, Arg152, and Arg155. The segment at 171–182 (EKQNFLLFDMTT) is beta-hairpin required for oligomerization.

The protein belongs to the GOLPH3/VPS74 family. Homooligomer.

Its subcellular location is the golgi apparatus. The protein resides in the golgi stack membrane. It localises to the trans-Golgi network membrane. Functionally, phosphatidylinositol-4-phosphate-binding protein that may play a role in the process of vesicle budding at the Golgi and anterograde transport to the plasma membrane. This is Golgi phosphoprotein 3-like A (golph3l-a) from Xenopus laevis (African clawed frog).